The following is a 422-amino-acid chain: Anhydromevalonate phosphate decarboxylase (422 aa).

Mn(2+)-binding residues include Asn-134 and Glu-197. The active-site Proton acceptor is Asp-244.

The protein belongs to the UbiD family. It depends on prenylated FMN as a cofactor. The cofactor is Mn(2+).

It carries out the reaction (2E)-3-methyl-5-phosphooxypent-2-enoate + H(+) = isopentenyl phosphate + CO2. The protein operates within isoprenoid biosynthesis; isopentenyl diphosphate biosynthesis via mevalonate pathway. Its function is as follows. Catalyzes the conversion of trans-anhydromevalonate 5-phosphate (tAHMP) into isopentenyl phosphate. Involved in the archaeal mevalonate (MVA) pathway, which provides fundamental precursors for isoprenoid biosynthesis, such as isopentenyl diphosphate (IPP) and dimethylallyl diphosphate (DMAPP). The chain is Anhydromevalonate phosphate decarboxylase from Methanosarcina mazei (strain ATCC BAA-159 / DSM 3647 / Goe1 / Go1 / JCM 11833 / OCM 88) (Methanosarcina frisia).